Consider the following 287-residue polypeptide: MDKIVSPSKTKAIVEKYKFRFSKSLGQNFLIDQNILEDIVDGADIQPDDCVIEIGPGIGTLTQFIAEKAHKVVAIEIDRNLIPILKHTLADYQNVEVINQDVLKVDLHQLIADKFEGKPVKVIANLPYYVTTPIVMRFLEEKVPVDSLVIMIQKEVAVRMQAGPGTKDYGALSIAVQYYCNPEILLKVPPSVFIPQPKVESIVIKLQVYPEPKVKVERDDLMFALVKDAFGKRRKTLLNALSSGLLQLSKEIVRESLEAANIDENRRGETLTIEEYATLTKEVAARQ.

Positions 28, 30, 55, 76, 101, and 125 each coordinate S-adenosyl-L-methionine.

This sequence belongs to the class I-like SAM-binding methyltransferase superfamily. rRNA adenine N(6)-methyltransferase family. RsmA subfamily.

It is found in the cytoplasm. It carries out the reaction adenosine(1518)/adenosine(1519) in 16S rRNA + 4 S-adenosyl-L-methionine = N(6)-dimethyladenosine(1518)/N(6)-dimethyladenosine(1519) in 16S rRNA + 4 S-adenosyl-L-homocysteine + 4 H(+). Functionally, specifically dimethylates two adjacent adenosines (A1518 and A1519) in the loop of a conserved hairpin near the 3'-end of 16S rRNA in the 30S particle. May play a critical role in biogenesis of 30S subunits. This is Ribosomal RNA small subunit methyltransferase A from Alkaliphilus metalliredigens (strain QYMF).